Consider the following 100-residue polypeptide: Urease subunit gamma (100 aa).

It belongs to the urease gamma subunit family. In terms of assembly, heterotrimer of UreA (gamma), UreB (beta) and UreC (alpha) subunits. Three heterotrimers associate to form the active enzyme.

The protein localises to the cytoplasm. The enzyme catalyses urea + 2 H2O + H(+) = hydrogencarbonate + 2 NH4(+). It participates in nitrogen metabolism; urea degradation; CO(2) and NH(3) from urea (urease route): step 1/1. This Pseudomonas syringae pv. syringae (strain B728a) protein is Urease subunit gamma.